We begin with the raw amino-acid sequence, 804 residues long: Leucine--tRNA ligase (804 aa).

The short motif at 40 to 51 (PYPSGAGLHVGH) is the 'HIGH' region element. The short motif at 576–580 (KMSKS) is the 'KMSKS' region element. K579 is an ATP binding site.

Belongs to the class-I aminoacyl-tRNA synthetase family.

Its subcellular location is the cytoplasm. It catalyses the reaction tRNA(Leu) + L-leucine + ATP = L-leucyl-tRNA(Leu) + AMP + diphosphate. In Bacillus subtilis (strain 168), this protein is Leucine--tRNA ligase.